A 329-amino-acid polypeptide reads, in one-letter code: MSSNAGEWCLMESDPGVFTELIKGFGCRGAQVEEIWSLEPESFEKLKPVHGLIFLFKWQPGEEPAGSVVQDSRLETIFFAKQVINNACATQAIVSVLLNCTHQDVHLGETLSEFKEFSQSFDAAMKGLALSNSDVIRQVHNSFARQQMFEFDTKTPAKEEDAFHFVSYVPVNGRLYELDGLREGPIDLGACNQDDWITAVRPVIEKRIQKYSEGEIRFNLMAIVSDRKMIYEQKIAELQRQLAEEEPMDTDQGSTVLSAIQSEVARNQMLIEEEVQKLKRYKIENIRRKHNYLPFIMELLKTLAEHQQLIPLVEKAKEKQNAKKAQETK.

Residues 7-225 form the UCH catalytic domain; sequence EWCLMESDPG…IRFNLMAIVS (219 aa). Lys-47 bears the N6-succinyllysine mark. Catalysis depends on Cys-88, which acts as the Nucleophile. N6-acetyllysine is present on Lys-158. His-164 serves as the catalytic Proton donor. Lys-289 is subject to N6-succinyllysine. The ULD domain occupies 291–319; that stretch reads NYLPFIMELLKTLAEHQQLIPLVEKAKEK. The segment at 313–329 is interaction with ADRM1; sequence VEKAKEKQNAKKAQETK.

This sequence belongs to the peptidase C12 family. Component of the 19S (PA700) regulatory complex of the 26S proteasome. Interacts with ADRM1 and NFRKB. Component of the INO80 complex; specifically part of a complex module associated with N-terminus of INO80.

The protein localises to the cytoplasm. The protein resides in the nucleus. It carries out the reaction Thiol-dependent hydrolysis of ester, thioester, amide, peptide and isopeptide bonds formed by the C-terminal Gly of ubiquitin (a 76-residue protein attached to proteins as an intracellular targeting signal).. Activated by ADRM1. Inhibited by interaction with NFRKB. In terms of biological role, protease that specifically cleaves 'Lys-48'-linked polyubiquitin chains. Deubiquitinating enzyme associated with the 19S regulatory subunit of the 26S proteasome. Putative regulatory component of the INO80 complex; however is inactive in the INO80 complex and is activated by a transient interaction of the INO80 complex with the proteasome via ADRM1. This is Ubiquitin carboxyl-terminal hydrolase isozyme L5 (Uchl5) from Mus musculus (Mouse).